The following is a 457-amino-acid chain: 5' exonuclease Apollo (457 aa).

Residues 425–437 (ELPKQYLLTPLNA) carry the TBM motif.

The protein belongs to the DNA repair metallo-beta-lactamase (DRMBL) family. In terms of assembly, interacts with TERF2; the interaction is direct.

Its subcellular location is the chromosome. It is found in the telomere. The protein localises to the nucleus. The catalysed reaction is a beta-lactam + H2O = a substituted beta-amino acid. Functionally, 5'-3' exonuclease that plays a central role in telomere maintenance and protection during S-phase. Participates in the protection of telomeres against non-homologous end-joining (NHEJ)-mediated repair, thereby ensuring that telomeres do not fuse. Plays a key role in telomeric loop (T loop) formation by being recruited by TERF2 at the leading end telomeres and by processing leading-end telomeres immediately after their replication via its exonuclease activity: generates 3' single-stranded overhang at the leading end telomeres avoiding blunt leading-end telomeres that are vulnerable to end-joining reactions and expose the telomere end in a manner that activates the DNA repair pathways. May be required for DNA interstrand cross-link repair. Possesses beta-lactamase activity, catalyzing the hydrolysis of penicillin G and nitrocefin. Exhibits no activity towards other beta-lactam antibiotic classes including cephalosporins (cefotaxime) and carbapenems (imipenem). The protein is 5' exonuclease Apollo (DCLRE1B) of Gallus gallus (Chicken).